Consider the following 783-residue polypeptide: Centrosomal protein of 89 kDa (783 aa).

A disordered region spans residues 28–49 (PKAAVPRTPPPRSPNPSPERPR). Residues 34 to 45 (RTPPPRSPNPSP) show a composition bias toward pro residues. At serine 50 the chain carries Phosphoserine. Disordered stretches follow at residues 63-157 (GRTV…DDLY) and 176-226 (DENI…DITG). Over residues 94-107 (ATTSQLRPRPNWQS) the composition is skewed to polar residues. 2 stretches are compositionally biased toward basic and acidic residues: residues 139–155 (ELGD…HSDD) and 196–214 (QQKD…KPPL). Coiled coils occupy residues 234–333 (EITR…SRYQ) and 369–719 (LLLA…GELE).

The protein resides in the cytoplasm. The protein localises to the cytosol. It is found in the cytoskeleton. It localises to the microtubule organizing center. Its subcellular location is the centrosome. The protein resides in the spindle pole. The protein localises to the centriole. It is found in the mitochondrion intermembrane space. Its function is as follows. Required for ciliogenesis. Also plays a role in mitochondrial metabolism where it may modulate complex IV activity. This is Centrosomal protein of 89 kDa (CEP89) from Homo sapiens (Human).